The primary structure comprises 192 residues: Thymidine kinase (192 aa).

ATP-binding positions include 9 to 16 and 87 to 90; these read SAMNAGKS and DECQ. Residue E88 is the Proton acceptor of the active site. Positions 145, 147, 182, and 185 each coordinate Zn(2+).

The protein belongs to the thymidine kinase family. Homotetramer.

Its subcellular location is the cytoplasm. It carries out the reaction thymidine + ATP = dTMP + ADP + H(+). The protein is Thymidine kinase of Vibrio vulnificus (strain CMCP6).